The sequence spans 572 residues: MADKSETTPPSIDGNVLVAKSLSHLGVTHMFGVVGIPVTSLASRAMALGIRFIAFHNEQSAGYAASAYGYLTGKPGILLTVSGPGCVHGLAGLSNAWVNTWPMVMISGSCDQRDVGRGDFQELDQIEAVKAFSKLSEKAKDVREIPDCVSRVLDRAVSGRPGGCYLDIPTDVLRQKISESEADKLVDEVERSRKEEPIRGSLRSEIESAVSLLRKAERPLIVFGKGAAYSRAEDELKKLVEITGIPFLPTPMGKGLLPDTHEFSATAARSLAIGKCDVALVVGARLNWLLHFGESPKWDKDVKFILVDVSEEEIELRKPHLGIVGDAKTVIGLLNREIKDDPFCLGKSNSWVESISKKAKENGEKMEIQLAKDVVPFNFLTPMRIIRDAILAVEGPSPVVVSEGANTMDVGRSVLVQKEPRTRLDAGTWGTMGVGLGYCIAAAVASPDRLVVAVEGDSGFGFSAMEVETLVRYNLAVVIIVFNNGGVYGGDRRGPEEISGPHKEDPAPTSFVPNAGYHKLIEAFGGKGYIVETPDELKSALAESFAARKPAVVNVIIDPFAGAESGRLQHKN.

Ala-2 is subject to N-acetylalanine. Residue Glu-58 coordinates thiamine diphosphate. The thiamine pyrophosphate binding stretch occupies residues 407–488; the sequence is TMDVGRSVLV…IIVFNNGGVY (82 aa). 2 residues coordinate Mg(2+): Asp-457 and Asn-484.

The protein belongs to the TPP enzyme family. Homotetramer. It depends on Mg(2+) as a cofactor. Thiamine diphosphate is required as a cofactor.

The catalysed reaction is an (R)-2-hydroxy-long-chain-fatty acyl-CoA = a long-chain fatty aldehyde + formyl-CoA. It carries out the reaction a 2-hydroxy-3-methyl fatty acyl-CoA = a 2-methyl-branched fatty aldehyde + formyl-CoA. Its function is as follows. Catalyzes a carbon-carbon cleavage reaction; cleaves a 2-hydroxy-3-methylacyl-CoA into formyl-CoA and a 2-methyl-branched fatty aldehyde. The chain is 2-hydroxyacyl-CoA lyase (HACL) from Arabidopsis thaliana (Mouse-ear cress).